The chain runs to 196 residues: MNPHDRIVQHFHESIRTKQMAMDALTESIADAGHLMAQALQAEGKILSCGNGGSAGDAQHFSSELLNRFEMERPGLPAVALTTDSSTLTSIANDYSYQEVFAKQVRALGQAQDILLAISTSGQSGNVNAAVAAAHERGMAVVALSGKDGGEMAGLLAERDVEIRVPSDVTARIQEVHLLAIHCLCDLIDQHLFGGA.

An SIS domain is found at 36-196; it reads MAQALQAEGK…LIDQHLFGGA (161 aa). Position 51 to 53 (51 to 53) interacts with substrate; the sequence is NGG. His-60 and Glu-64 together coordinate Zn(2+). Residues Glu-64, 93-94, 119-121, Ser-124, and Gln-174 contribute to the substrate site; these read ND and STS. Residues Gln-174 and His-182 each coordinate Zn(2+).

This sequence belongs to the SIS family. GmhA subfamily. As to quaternary structure, homotetramer. The cofactor is Zn(2+).

It is found in the cytoplasm. The catalysed reaction is 2 D-sedoheptulose 7-phosphate = D-glycero-alpha-D-manno-heptose 7-phosphate + D-glycero-beta-D-manno-heptose 7-phosphate. The protein operates within carbohydrate biosynthesis; D-glycero-D-manno-heptose 7-phosphate biosynthesis; D-glycero-alpha-D-manno-heptose 7-phosphate and D-glycero-beta-D-manno-heptose 7-phosphate from sedoheptulose 7-phosphate: step 1/1. In terms of biological role, catalyzes the isomerization of sedoheptulose 7-phosphate in D-glycero-D-manno-heptose 7-phosphate. This Alkalilimnicola ehrlichii (strain ATCC BAA-1101 / DSM 17681 / MLHE-1) protein is Phosphoheptose isomerase.